A 362-amino-acid polypeptide reads, in one-letter code: Homeobox protein extradenticle (362 aa).

Residues 34-225 enclose the PBC domain; it reads PRKQDIGEIL…VMILRSRFLD (192 aa). The PBC-A stretch occupies residues 41 to 120; that stretch reads EILQQIMNIT…EGVAGPEKGG (80 aa). The segment at 123–225 is PBC-B; the sequence is DFLSQSDLTG…VMILRSRFLD (103 aa). The homeobox; TALE-type DNA-binding region spans 226 to 288; the sequence is ARRKRRNFSK…NKRIRYKKNI (63 aa). Residues 305–362 form a disordered region; sequence GASPYSMGGPPSGAATPMMSPAPAQDSMGYSLGSGGYDQQQPYDGSMGYDQLHQDLSP.

It belongs to the TALE/PBX homeobox family.

It localises to the nucleus. Its function is as follows. Transcription factor which acts with the selector homeodomain proteins altering the regulation of downstream target genes such as wingless (wg), teashirt (tsh) and decapentaplegic (dpp), thus affecting segmental identity. The protein is Homeobox protein extradenticle of Anopheles gambiae (African malaria mosquito).